Reading from the N-terminus, the 205-residue chain is Adenylyl-sulfate kinase (205 aa).

31 to 38 contacts ATP; sequence GLSGAGKS. Ser105 functions as the Phosphoserine intermediate in the catalytic mechanism.

This sequence belongs to the APS kinase family.

It carries out the reaction adenosine 5'-phosphosulfate + ATP = 3'-phosphoadenylyl sulfate + ADP + H(+). It participates in sulfur metabolism; hydrogen sulfide biosynthesis; sulfite from sulfate: step 2/3. Its function is as follows. Catalyzes the synthesis of activated sulfate. The polypeptide is Adenylyl-sulfate kinase (Shewanella putrefaciens (strain CN-32 / ATCC BAA-453)).